The sequence spans 56 residues: Large ribosomal subunit protein bL33 (56 aa).

The protein belongs to the bacterial ribosomal protein bL33 family.

The sequence is that of Large ribosomal subunit protein bL33 from Ehrlichia ruminantium (strain Gardel).